The following is a 508-amino-acid chain: MQRLLTPVKRILQLTRAVQETSLTPARLLPVAHQRFSTASAVPLAKTDTWPKDVGILALEVYFPAQYVDQTDLEKYNNVEAGKYTVGLGQTRMGFCSVQEDINSLCLTVVQRLMERIQLPWDSVGRLEVGTETIIDKSKAVKTVLMELFQDSGNTDIEGIDTTNACYGGTASLFNAANWMESSSWDGRYAMVVCGDIAVYPSGNARPTGGAGAVAMLIGPKAPLALERGLRGTHMENVYDFYKPNLASEYPIVDGKLSIQCYLRALDRCYTSYRKKIQNQWKQAGSDRPFTLDDLQYMIFHTPFCKMVQKSLARLMFNDFLSASSDTQTSLYKGLEAFGGLKLEDTYTNKDLDKALLKASQDMFDKKTKASLYLSTHNGNMYTSSLYGCLASLLSHHSAQELAGSRIGAFSYGSGLAASFFSFRVSQDAAPGSPLDKLVSSTSDLPKRLASRKCVSPEEFTEIMNQREQFYHKVNFSPPGDTNSLFPGTWYLERVDEQHRRKYARRPV.

The transit peptide at 1–37 (MQRLLTPVKRILQLTRAVQETSLTPARLLPVAHQRFS) directs the protein to the mitochondrion. The residue at position 52 (lysine 52) is an N6-succinyllysine. (3S)-3-hydroxy-3-methylglutaryl-CoA-binding residues include glutamate 80 and alanine 81. Lysine 83 is subject to N6-acetyllysine; alternate. Lysine 83 is modified (N6-succinyllysine; alternate). The active-site Proton donor/acceptor is glutamate 132. Residues cysteine 166, asparagine 204, and threonine 208 each contribute to the (3S)-3-hydroxy-3-methylglutaryl-CoA site. The active-site Acyl-thioester intermediate is the cysteine 166. N6-succinyllysine is present on lysine 221. The residue at position 243 (lysine 243) is an N6-acetyllysine. Lysine 256 bears the N6-acetyllysine; alternate mark. Lysine 256 is modified (N6-succinyllysine; alternate). Residues serine 258 and histidine 301 each coordinate (3S)-3-hydroxy-3-methylglutaryl-CoA. Histidine 301 (proton donor/acceptor) is an active-site residue. N6-acetyllysine is present on lysine 306. Lysine 310 provides a ligand contact to (3S)-3-hydroxy-3-methylglutaryl-CoA. An N6-acetyllysine; alternate modification is found at lysine 310. Position 310 is an N6-succinyllysine; alternate (lysine 310). Lysine 333 carries the post-translational modification N6-succinyllysine. An N6-acetyllysine; alternate mark is found at lysine 342, lysine 350, lysine 354, and lysine 358. N6-succinyllysine; alternate occurs at positions 342, 350, 354, and 358. Asparagine 380 and serine 414 together coordinate (3S)-3-hydroxy-3-methylglutaryl-CoA. Serine 433 carries the post-translational modification Phosphoserine. N6-acetyllysine is present on lysine 437. Phosphoserine is present on serine 440. N6-acetyllysine; alternate is present on lysine 447. Lysine 447 bears the N6-succinyllysine; alternate mark. Residue serine 456 is modified to Phosphoserine. At lysine 473 the chain carries N6-acetyllysine; alternate. An N6-succinyllysine; alternate modification is found at lysine 473. Serine 477 carries the post-translational modification Phosphoserine.

The protein belongs to the thiolase-like superfamily. HMG-CoA synthase family. As to quaternary structure, homodimer. Succinylated. Desuccinylated by SIRT5. Succinylation, at least at Lys-83 and Lys-310, inhibits the enzymatic activity. As to expression, expression in liver is 200-fold higher than in any other tissue. Low expression in colon, kidney, testis, and pancreas. Very low expression in heart and skeletal muscle. Not detected in brain. In terms of tissue distribution, highest expression detected in heart and skeletal muscle.

It is found in the mitochondrion. It carries out the reaction acetoacetyl-CoA + acetyl-CoA + H2O = (3S)-3-hydroxy-3-methylglutaryl-CoA + CoA + H(+). It functions in the pathway metabolic intermediate biosynthesis; (R)-mevalonate biosynthesis; (R)-mevalonate from acetyl-CoA: step 2/3. In terms of biological role, catalyzes the first irreversible step in ketogenesis, condensing acetyl-CoA to acetoacetyl-CoA to form HMG-CoA, which is converted by HMG-CoA reductase (HMGCR) into mevalonate. The protein is Hydroxymethylglutaryl-CoA synthase, mitochondrial (HMGCS2) of Homo sapiens (Human).